The sequence spans 60 residues: Mastoparan-V (60 aa).

The N-terminal stretch at 1-27 is a signal peptide; the sequence is MKNTILILFTAFIALLGFFGMSAEALA. AXPX repeat units lie at residues 27-30, 31-34, 35-38, and 41-44; these read ADPV, ADPL, AGPN, and ADPE. Positions 28 to 45 are excised as a propeptide; the sequence is DPVADPLAGPNAEADPEA. Residue Leu-59 is modified to Leucine amide.

The protein belongs to the MCD family. Mastoparan subfamily. As to expression, expressed by the venom gland.

The protein resides in the secreted. It localises to the target cell membrane. Antimicrobial and mast cell degranulating peptide. Has broad spectrum antibacterial activity against both Gram-positive and Gram-negative bacteria (S.aureus MIC=32-64 ug/ml, S.xylosus MIC=3 ug/ml, S.alactolyticus MIC=16 ug/ml, C.koseri MIC=4 ug/ml, E.coli MIC=8 ug/ml, K.pneumoniae MIC=64 ug/ml, P.aerugiosa MIC=256 ug/ml, S.choleraesuis MIC=32 ug/ml, S.typhimurium MIC=32 ug/ml, V.parahamelytics MIC=32 ug/ml). Affects membrane permeability of E.coli. Shows hemolytic activities on sheep, chicken and human erythrocytes. Its mast cell degranulation activity may be related to the activation of G-protein coupled receptors in mast cells as well as interaction with other proteins located in cell endosomal membranes in the mast cells. The protein is Mastoparan-V of Vespa velutina flavitarsus (Asian hornet).